The primary structure comprises 185 residues: Peptide deformylase (185 aa).

Fe cation is bound by residues C98 and H140. Residue E141 is part of the active site. H144 is a binding site for Fe cation.

This sequence belongs to the polypeptide deformylase family. It depends on Fe(2+) as a cofactor.

The catalysed reaction is N-terminal N-formyl-L-methionyl-[peptide] + H2O = N-terminal L-methionyl-[peptide] + formate. Removes the formyl group from the N-terminal Met of newly synthesized proteins. Requires at least a dipeptide for an efficient rate of reaction. N-terminal L-methionine is a prerequisite for activity but the enzyme has broad specificity at other positions. The sequence is that of Peptide deformylase from Parabacteroides distasonis (strain ATCC 8503 / DSM 20701 / CIP 104284 / JCM 5825 / NCTC 11152).